The chain runs to 463 residues: L-seryl-tRNA(Sec) selenium transferase (463 aa).

Lys-295 is modified (N6-(pyridoxal phosphate)lysine).

The protein belongs to the SelA family. Homodecamer; pentamer of dimers. Binds only one seryl-tRNA(Sec) per dimer. Pyridoxal 5'-phosphate is required as a cofactor.

It localises to the cytoplasm. The enzyme catalyses L-seryl-tRNA(Sec) + selenophosphate + H(+) = L-selenocysteinyl-tRNA(Sec) + phosphate. It functions in the pathway aminoacyl-tRNA biosynthesis; selenocysteinyl-tRNA(Sec) biosynthesis; selenocysteinyl-tRNA(Sec) from L-seryl-tRNA(Sec) (bacterial route): step 1/1. Its function is as follows. Converts seryl-tRNA(Sec) to selenocysteinyl-tRNA(Sec) required for selenoprotein biosynthesis. The sequence is that of L-seryl-tRNA(Sec) selenium transferase from Edwardsiella ictaluri (strain 93-146).